Here is a 344-residue protein sequence, read N- to C-terminus: Phosphoribosylformylglycinamidine cyclo-ligase (344 aa).

The protein belongs to the AIR synthase family.

The protein localises to the cytoplasm. The catalysed reaction is 2-formamido-N(1)-(5-O-phospho-beta-D-ribosyl)acetamidine + ATP = 5-amino-1-(5-phospho-beta-D-ribosyl)imidazole + ADP + phosphate + H(+). It participates in purine metabolism; IMP biosynthesis via de novo pathway; 5-amino-1-(5-phospho-D-ribosyl)imidazole from N(2)-formyl-N(1)-(5-phospho-D-ribosyl)glycinamide: step 2/2. The polypeptide is Phosphoribosylformylglycinamidine cyclo-ligase (Leptospira interrogans serogroup Icterohaemorrhagiae serovar Lai (strain 56601)).